A 195-amino-acid chain; its full sequence is Anthranilate synthase component 2 (195 aa).

Residues 1 to 195 form the Glutamine amidotransferase type-1 domain; it reads MILIIDNYDS…LKNFLSLSYG (195 aa). 52-54 contributes to the L-glutamine binding site; sequence GPG. Cysteine 79 acts as the Nucleophile; for GATase activity in catalysis. L-glutamine-binding positions include glutamine 83 and 129–130; that span reads SL. Residues histidine 173 and glutamate 175 contribute to the active site.

Tetramer of two components I and two components II.

It is found in the plastid. The protein localises to the chloroplast. The enzyme catalyses chorismate + L-glutamine = anthranilate + pyruvate + L-glutamate + H(+). It participates in amino-acid biosynthesis; L-tryptophan biosynthesis; L-tryptophan from chorismate: step 1/5. The protein is Anthranilate synthase component 2 (trpG) of Cyanidium caldarium (Red alga).